The sequence spans 237 residues: V-type proton ATPase subunit E (237 aa).

It belongs to the V-ATPase E subunit family. V-ATPase is a heteromultimeric enzyme composed of a peripheral catalytic V1 complex (components A to H) attached to an integral membrane V0 proton pore complex (components: a, c, c', c'' and d).

In terms of biological role, subunit of the peripheral V1 complex of vacuolar ATPase essential for assembly or catalytic function. V-ATPase is responsible for acidifying a variety of intracellular compartments in eukaryotic cells. The polypeptide is V-type proton ATPase subunit E (VATE) (Gossypium hirsutum (Upland cotton)).